We begin with the raw amino-acid sequence, 294 residues long: Phosphatidylinositol transfer protein SFH5 (294 aa).

A CRAL-TRIO domain is found at 100-266 (HNTELQNVGI…GYGGKDKKNN (167 aa)). 5 residues coordinate heme: Tyr128, Arg148, His173, Tyr175, and Lys209.

Belongs to the SFH5 family. Requires heme b as cofactor.

It localises to the cytoplasm. The protein resides in the endoplasmic reticulum membrane. The protein localises to the microsome membrane. It catalyses the reaction a 1,2-diacyl-sn-glycero-3-phospho-(1D-myo-inositol)(in) = a 1,2-diacyl-sn-glycero-3-phospho-(1D-myo-inositol)(out). In terms of biological role, non-classical phosphatidylinositol (PtdIns) transfer protein (PITP), which exhibits PtdIns-binding/transfer activity in the absence of detectable PtdCho-binding/transfer activity. Regulates PtdIns(4,5)P2 homeostasis at the plasma membrane. Heme-binding protein that may play a role in organic oxidant-induced stress responses. This chain is Phosphatidylinositol transfer protein SFH5 (SFH5), found in Saccharomyces cerevisiae (strain YJM789) (Baker's yeast).